Reading from the N-terminus, the 631-residue chain is Occlusion-derived virus envelope protein E66 (631 aa).

It belongs to the baculoviridae E66 family.

It localises to the virion membrane. In terms of biological role, component of the polyhedra envelope. The protein is Occlusion-derived virus envelope protein E66 of Leucania separata nucleopolyhedrovirus (LsNPV).